Consider the following 654-residue polypeptide: Fructose-1,6-bisphosphatase class 3 (654 aa).

The disordered stretch occupies residues 288–307; it reads NPAFKPKKRPDKHERLTQRE. The span at 298-307 shows a compositional bias: basic and acidic residues; the sequence is DKHERLTQRE.

The protein belongs to the FBPase class 3 family. Mn(2+) serves as cofactor.

The enzyme catalyses beta-D-fructose 1,6-bisphosphate + H2O = beta-D-fructose 6-phosphate + phosphate. Its pathway is carbohydrate biosynthesis; gluconeogenesis. The polypeptide is Fructose-1,6-bisphosphatase class 3 (Staphylococcus aureus (strain USA300)).